Consider the following 179-residue polypeptide: Probable chorismate pyruvate-lyase (179 aa).

Residues R82, L120, and E165 each contribute to the substrate site.

The protein belongs to the UbiC family.

It localises to the cytoplasm. The enzyme catalyses chorismate = 4-hydroxybenzoate + pyruvate. The protein operates within cofactor biosynthesis; ubiquinone biosynthesis. Removes the pyruvyl group from chorismate, with concomitant aromatization of the ring, to provide 4-hydroxybenzoate (4HB) for the ubiquinone pathway. The polypeptide is Probable chorismate pyruvate-lyase (Vibrio cholerae serotype O1 (strain ATCC 39315 / El Tor Inaba N16961)).